The primary structure comprises 545 residues: Lysine--tRNA ligase (545 aa).

A 'HIGH' region motif is present at residues 41-49 (PSGVPHLGH). A 'KMSKS' region motif is present at residues 306–310 (ALSSS).

Belongs to the class-I aminoacyl-tRNA synthetase family.

The protein resides in the cytoplasm. It catalyses the reaction tRNA(Lys) + L-lysine + ATP = L-lysyl-tRNA(Lys) + AMP + diphosphate. This chain is Lysine--tRNA ligase, found in Natronomonas pharaonis (strain ATCC 35678 / DSM 2160 / CIP 103997 / JCM 8858 / NBRC 14720 / NCIMB 2260 / Gabara) (Halobacterium pharaonis).